We begin with the raw amino-acid sequence, 185 residues long: Potassium-transporting ATPase KdpC subunit (185 aa).

A helical membrane pass occupies residues 14–34 (ALSLLTGVAYPLALTGIAAVI). The segment at 105-128 (AQNGAPAPVDAVTASGSGLDPHVS) is disordered.

This sequence belongs to the KdpC family. The system is composed of three essential subunits: KdpA, KdpB and KdpC.

Its subcellular location is the cell inner membrane. Functionally, part of the high-affinity ATP-driven potassium transport (or Kdp) system, which catalyzes the hydrolysis of ATP coupled with the electrogenic transport of potassium into the cytoplasm. This subunit acts as a catalytic chaperone that increases the ATP-binding affinity of the ATP-hydrolyzing subunit KdpB by the formation of a transient KdpB/KdpC/ATP ternary complex. The chain is Potassium-transporting ATPase KdpC subunit from Cereibacter sphaeroides (strain ATCC 17029 / ATH 2.4.9) (Rhodobacter sphaeroides).